A 257-amino-acid polypeptide reads, in one-letter code: Undecaprenyl-diphosphatase (257 aa).

The next 8 helical transmembrane spans lie at 4 to 24, 41 to 61, 74 to 94, 103 to 123, 133 to 153, 173 to 193, 209 to 229, and 236 to 256; these read LIRV…PISS, SVTL…VVFW, VIGL…TIKT, PLLA…LGRL, LGLG…LPGI, SVTF…VLAI, VLSI…KWLI, and RLHW…LLNL.

It belongs to the UppP family.

It localises to the cell inner membrane. It carries out the reaction di-trans,octa-cis-undecaprenyl diphosphate + H2O = di-trans,octa-cis-undecaprenyl phosphate + phosphate + H(+). Catalyzes the dephosphorylation of undecaprenyl diphosphate (UPP). Confers resistance to bacitracin. This Rhodopirellula baltica (strain DSM 10527 / NCIMB 13988 / SH1) protein is Undecaprenyl-diphosphatase.